We begin with the raw amino-acid sequence, 576 residues long: Low-affinity glucose transporter HXT4 (576 aa).

Positions 1 to 56 are disordered; it reads MSEEAAYQEDTAVQNTPADALSPVESDSNSALSTPSNKAERDDMKDFDENHEESNN. Residues 1–66 lie on the Cytoplasmic side of the membrane; it reads MSEEAAYQED…YVEIPKKPAS (66 aa). Residues 25–37 are compositionally biased toward polar residues; that stretch reads ESDSNSALSTPSN. Over residues 38-54 the composition is skewed to basic and acidic residues; sequence KAERDDMKDFDENHEES. K45 participates in a covalent cross-link: Glycyl lysine isopeptide (Lys-Gly) (interchain with G-Cter in ubiquitin). A helical transmembrane segment spans residues 67–87; the sequence is AYVTVSICCLMVAFGGFVFGW. Residues 88–122 are Extracellular-facing; the sequence is DTGTISGFVAQTDFIRRFGMKHHDGTYYLSKVRTG. A helical transmembrane segment spans residues 123–143; the sequence is LMVSIINIGCAIGGIILAKLG. Over 144–149 the chain is Cytoplasmic; it reads DMYGRK. A helical membrane pass occupies residues 150–170; sequence MGLIVVVVIYIIGIIIQIASI. Topologically, residues 171–180 are extracellular; the sequence is NKWYQYFIGR. A helical transmembrane segment spans residues 181-201; the sequence is IISGLGVGGIAVLSPMLISEV. Residues 202–207 are Cytoplasmic-facing; the sequence is SPKHIR. A helical transmembrane segment spans residues 208 to 228; sequence GTLVSCYQLMITLGIFLGYCT. The Extracellular segment spans residues 229 to 242; it reads NYGTKTYTNSVQWR. The helical transmembrane segment at 243-263 threads the bilayer; the sequence is VPLGLGFAWALFMIGGMTFVP. At 264–346 the chain is on the cytoplasmic side; that stretch reads ESPRYLVEVG…IQSLQQLTGD (83 aa). The helical transmembrane segment at 347–363 threads the bilayer; the sequence is NYFFYYGTTVFTAVGLS. Over 364-369 the chain is Extracellular; the sequence is DSFETS. A helical membrane pass occupies residues 370–387; that stretch reads IVLGIVNFASTFVGIFLV. The Cytoplasmic segment spans residues 388-394; the sequence is ERYGRRR. Residues 395–415 form a helical membrane-spanning segment; sequence CLLWGAASMTACMVVFASVGV. The Extracellular segment spans residues 416–437; it reads TRLWPNGKKNGSSKGAGNCMIV. N425 carries N-linked (GlcNAc...) asparagine glycosylation. Residues 438–458 traverse the membrane as a helical segment; that stretch reads FTCFYLFCFATTWAPIPFVVN. Residues 459–475 are Cytoplasmic-facing; the sequence is SETFPLRVKSKCMAIAQ. Residues 476–496 form a helical membrane-spanning segment; that stretch reads ACNWIWGFLIGFFTPFISNAI. Position 497 (D497) is a topological domain, extracellular. Residues 498-518 form a helical membrane-spanning segment; sequence FYYGYVFMGCLVFSYFYVFFF. The Cytoplasmic portion of the chain corresponds to 519–576; that stretch reads VPETKGLTLEEVNTLWEEGVLPWKSPSWVPPNKRGTDYNADDLMHDDQPFYKKMFGKK.

Belongs to the major facilitator superfamily. Sugar transporter (TC 2.A.1.1) family.

The protein localises to the cell membrane. With respect to regulation, xylose uptake is strongly inhibited by glucose. Low-affinity glucose transporter. Can also transport xylose. In Saccharomyces cerevisiae (strain JAY291) (Baker's yeast), this protein is Low-affinity glucose transporter HXT4 (HXT4).